A 301-amino-acid chain; its full sequence is MKIGVLSQFPELYSTRRLVEACESRGHEAWVINPINCYMNINSVKPSIHLEGEEVPMFDAIIPRIHASVTFYGCAVVRQFEMMGVFAANDSISIARSRDKLRALQLLSRKGIGMPVTGFANKPNNIPDLINMVGGAPLVIKLLEGTQGIGVVLAETRKAAESVIEAFLGLKANIMVQEYIKEANGSDIRCFVVGDKVVAAMRRQGPEGDFRSNLHLGGSAEPVKITPQERKSAVAAAKAMGLVVAGVDILRSARGPLVLEVNSAPGIEGIEQATGIKVAEPIVEYIEKVVAARRANHQVIA.

The 184-residue stretch at 104 to 287 folds into the ATP-grasp domain; the sequence is LQLLSRKGIG…VAEPIVEYIE (184 aa). ATP-binding positions include Lys141, 178–179, Asp187, and 211–213; these read EY and RSN. Mg(2+) is bound by residues Asp248, Glu260, and Asn262. Asp248, Glu260, and Asn262 together coordinate Mn(2+).

The protein belongs to the RimK family. The cofactor is Mg(2+). It depends on Mn(2+) as a cofactor.

This is Probable alpha-L-glutamate ligase 2 from Shewanella amazonensis (strain ATCC BAA-1098 / SB2B).